Reading from the N-terminus, the 261-residue chain is Methionine aminopeptidase (261 aa).

Residue H78 participates in substrate binding. A divalent metal cation contacts are provided by D96, D107, and H170. H177 provides a ligand contact to substrate. The a divalent metal cation site is built by E202 and E233.

The protein belongs to the peptidase M24A family. Methionine aminopeptidase type 1 subfamily. Monomer. Co(2+) is required as a cofactor. It depends on Zn(2+) as a cofactor. The cofactor is Mn(2+). Fe(2+) serves as cofactor.

The catalysed reaction is Release of N-terminal amino acids, preferentially methionine, from peptides and arylamides.. Removes the N-terminal methionine from nascent proteins. The N-terminal methionine is often cleaved when the second residue in the primary sequence is small and uncharged (Met-Ala-, Cys, Gly, Pro, Ser, Thr, or Val). Requires deformylation of the N(alpha)-formylated initiator methionine before it can be hydrolyzed. This Buchnera aphidicola subsp. Schizaphis graminum (strain Sg) protein is Methionine aminopeptidase.